Here is a 197-residue protein sequence, read N- to C-terminus: MTTLQERVAAHFAESIRAKQEAGKVLVEPTVQAAELMLQCLMNDGKILACGNGGSAADAQHFAAEMTGRFEKERMELAAVALTTDTSALTAIGNDYGFNHVFSKQVRALGRAGDILVGISTSGNSANVIEAIKAAHERDMHVIALTGRDGGKIAAILKDTDVLLNVPHPRTARIQENHILLIHAICDCIDSVLLEGM.

Residues 37 to 197 enclose the SIS domain; it reads MLQCLMNDGK…CIDSVLLEGM (161 aa). A substrate-binding site is contributed by 52–54; the sequence is NGG. 2 residues coordinate Zn(2+): His61 and Glu65. Residues Glu65, 94–95, 120–122, Ser125, and Gln175 contribute to the substrate site; these read ND and STS. Residues Gln175 and His183 each coordinate Zn(2+).

This sequence belongs to the SIS family. GmhA subfamily. Homotetramer. Zn(2+) is required as a cofactor.

It localises to the cytoplasm. The catalysed reaction is 2 D-sedoheptulose 7-phosphate = D-glycero-alpha-D-manno-heptose 7-phosphate + D-glycero-beta-D-manno-heptose 7-phosphate. It functions in the pathway carbohydrate biosynthesis; D-glycero-D-manno-heptose 7-phosphate biosynthesis; D-glycero-alpha-D-manno-heptose 7-phosphate and D-glycero-beta-D-manno-heptose 7-phosphate from sedoheptulose 7-phosphate: step 1/1. Catalyzes the isomerization of sedoheptulose 7-phosphate in D-glycero-D-manno-heptose 7-phosphate. In Neisseria meningitidis serogroup C / serotype 2a (strain ATCC 700532 / DSM 15464 / FAM18), this protein is Phosphoheptose isomerase.